The following is a 330-amino-acid chain: UPF0353 protein MAP_3434 (330 aa).

Transmembrane regions (helical) follow at residues Gly21–Ala41 and Leu63–Thr83. A VWFA domain is found at Val94–Ile289. Residues Ala304–Ile324 traverse the membrane as a helical segment.

It belongs to the UPF0353 family.

The protein localises to the cell membrane. This chain is UPF0353 protein MAP_3434, found in Mycolicibacterium paratuberculosis (strain ATCC BAA-968 / K-10) (Mycobacterium paratuberculosis).